The chain runs to 136 residues: Large ribosomal subunit protein uL16 (136 aa).

This sequence belongs to the universal ribosomal protein uL16 family. In terms of assembly, part of the 50S ribosomal subunit.

In terms of biological role, binds 23S rRNA and is also seen to make contacts with the A and possibly P site tRNAs. The protein is Large ribosomal subunit protein uL16 of Shewanella baltica (strain OS155 / ATCC BAA-1091).